Consider the following 183-residue polypeptide: Large ribosomal subunit protein uL6 (183 aa).

This sequence belongs to the universal ribosomal protein uL6 family. Part of the 50S ribosomal subunit.

In terms of biological role, this protein binds to the 23S rRNA, and is important in its secondary structure. It is located near the subunit interface in the base of the L7/L12 stalk, and near the tRNA binding site of the peptidyltransferase center. This Moorella thermoacetica (strain ATCC 39073 / JCM 9320) protein is Large ribosomal subunit protein uL6.